Consider the following 377-residue polypeptide: 4-hydroxy-tetrahydrodipicolinate synthase 2, chloroplastic (377 aa).

The N-terminal 51 residues, 1–51, are a transit peptide targeting the chloroplast; sequence MMAAQPTANPGVRLGWKAPGALASPPRLALSRSAAAPLASHRVGRGKFSAA. Pyruvate is bound at residue Thr120. The active-site Proton donor/acceptor is Tyr206. Catalysis depends on Lys234, which acts as the Schiff-base intermediate with substrate. Pyruvate is bound at residue Ile273.

This sequence belongs to the DapA family. As to quaternary structure, tetramer of modified subunits derived from two genes in different combinations.

Its subcellular location is the plastid. It is found in the chloroplast. It catalyses the reaction L-aspartate 4-semialdehyde + pyruvate = (2S,4S)-4-hydroxy-2,3,4,5-tetrahydrodipicolinate + H2O + H(+). Its pathway is amino-acid biosynthesis; L-lysine biosynthesis via DAP pathway; (S)-tetrahydrodipicolinate from L-aspartate: step 3/4. Its activity is regulated as follows. Sensitive to lysine inhibition. This inhibition increase in an allosteric manner with increasing concentration of the inhibitor. In terms of biological role, catalyzes the condensation of (S)-aspartate-beta-semialdehyde [(S)-ASA] and pyruvate to 4-hydroxy-tetrahydrodipicolinate (HTPA). This chain is 4-hydroxy-tetrahydrodipicolinate synthase 2, chloroplastic, found in Triticum aestivum (Wheat).